We begin with the raw amino-acid sequence, 417 residues long: Gap junction alpha-3 protein (417 aa).

The stretch at 2–15 is an intramembrane region; that stretch reads GDWSFLGRLLENAQ. At 16–19 the chain is on the cytoplasmic side; that stretch reads EHST. Residues 20–40 traverse the membrane as a helical segment; sequence VIGKVWLTVLFIFRILVLGAA. Over 41–71 the chain is Extracellular; that stretch reads AEEVWGDEQSDFTCNTQQPGCENVCYDRAFP. 3 disulfides stabilise this stretch: Cys54–Cys198, Cys61–Cys192, and Cys65–Cys187. The helical transmembrane segment at 72 to 92 threads the bilayer; the sequence is ISHIRFWALQIIFVSTPTLIY. Over 93–158 the chain is Cytoplasmic; that stretch reads LGHVLHIVRM…GALLRTYVFN (66 aa). Residues 110–128 show a composition bias toward basic and acidic residues; it reads EEELLRRDNPQHGRGREPM. The tract at residues 110–141 is disordered; it reads EEELLRRDNPQHGRGREPMRTGSPRDPPLRDD. A helical transmembrane segment spans residues 159–179; sequence IIFKTLFEVGFIAGQYFLYGF. The Extracellular portion of the chain corresponds to 180–207; that stretch reads QLQPLYRCDRWPCPNTVDCFISRPTEKT. A helical transmembrane segment spans residues 208-228; the sequence is IFVIFMLAVACASLVLNMLEI. Residues 229-417 are Cytoplasmic-facing; that stretch reads YHLGWKKLKQ…GRARPGDLAI (189 aa). 2 disordered regions span residues 247–267 and 334–417; these read DASEARHKPLDPLPTATSSGP and RQVA…DLAI. Residues 342-353 show a composition bias toward low complexity; that stretch reads PASKPSSAASSP.

It belongs to the connexin family. Alpha-type (group II) subfamily. As to quaternary structure, a hemichannel or connexon is composed of a hexamer of connexins. A functional gap junction is formed by the apposition of two hemichannels. Forms heteromeric channels with GJA8.

It localises to the cell membrane. The protein resides in the cell junction. It is found in the gap junction. Its function is as follows. Structural component of lens fiber gap junctions. Gap junctions are dodecameric channels that connect the cytoplasm of adjoining cells. They are formed by the docking of two hexameric hemichannels, one from each cell membrane. Small molecules and ions diffuse from one cell to a neighboring cell via the central pore. This is Gap junction alpha-3 protein (Gja3) from Mus musculus (Mouse).